The sequence spans 533 residues: Phospho-2-dehydro-3-deoxyheptonate aldolase 1, chloroplastic (533 aa).

The N-terminal 57 residues, 1-57, are a transit peptide targeting the chloroplast; the sequence is MALSTNSTTSSLLPKTPLVQQPLLKNASLPTTTKAIRFIQPISAIHSSDSSKNTPIV. Residues 47–56 are compositionally biased toward polar residues; the sequence is SSDSSKNTPI. Residues 47-70 are disordered; the sequence is SSDSSKNTPIVSAKPSSPPAATST. Residues 57–70 are compositionally biased toward low complexity; sequence VSAKPSSPPAATST. Residue C145 participates in Mn(2+) binding. Substrate contacts are provided by residues R184, 343–344, K366, and R397; that span reads ER. Mn(2+)-binding residues include H429, E471, and D501.

The protein belongs to the class-II DAHP synthase family. As to quaternary structure, homodimer. Mn(2+) serves as cofactor. In terms of tissue distribution, mostly expressed in flowers, especially in petal limbs and tubes, and, to a lower extent, in roots, stems, stigmas, anthers, leaves and sepals.

It is found in the plastid. The protein resides in the chloroplast. It catalyses the reaction D-erythrose 4-phosphate + phosphoenolpyruvate + H2O = 7-phospho-2-dehydro-3-deoxy-D-arabino-heptonate + phosphate. The protein operates within metabolic intermediate biosynthesis; chorismate biosynthesis; chorismate from D-erythrose 4-phosphate and phosphoenolpyruvate: step 1/7. Involved in the production of volatile organic compounds (VOCs), including floral volatile benzenoids and phenylpropanoids (FVBP), in flowers of fragrant cultivars (e.g. cv. Mitchell and cv. V26), scent attracting pollinators (e.g. the night-active hawkmoth pollinator Manduca sexta). Catalyzes an aldol-like condensation reaction between phosphoenolpyruvate (PEP) and D-erythrose 4-phosphate (E4P) to generate 3-deoxy-D-arabino-heptulosonate 7-phosphate (DAH7P) and inorganic phosphate. In Petunia hybrida (Petunia), this protein is Phospho-2-dehydro-3-deoxyheptonate aldolase 1, chloroplastic.